A 243-amino-acid chain; its full sequence is MEAKDRLIVALDVDTRDEAISIVNAVGEHCGLFKVGMQLHNSAGFAVTEEILSMGFPVFLDLKFHDIPNTVGKAATVVSRRGVKMFTVHAAGGREMLRQAVKGAREGQGERRSGGPLVLAITVLTSVSQAVLHDEVGLPGSVEENVVRFARLAQAAGVQGVVASPQEIRPIRAACGDDFVIVTPGVRPLWAGTDDQARIMTPAKAMEAGATYLVVGRPITAAPSRAEAAKRIVEEMAEGLARR.

Residues Asp-12, Lys-34, 61–70 (DLKFHDIPNT), Thr-125, Arg-187, Gln-196, Gly-216, and Arg-217 contribute to the substrate site. Lys-63 acts as the Proton donor in catalysis.

It belongs to the OMP decarboxylase family. Type 1 subfamily. As to quaternary structure, homodimer.

It carries out the reaction orotidine 5'-phosphate + H(+) = UMP + CO2. Its pathway is pyrimidine metabolism; UMP biosynthesis via de novo pathway; UMP from orotate: step 2/2. In terms of biological role, catalyzes the decarboxylation of orotidine 5'-monophosphate (OMP) to uridine 5'-monophosphate (UMP). The chain is Orotidine 5'-phosphate decarboxylase from Heliobacterium modesticaldum (strain ATCC 51547 / Ice1).